A 630-amino-acid chain; its full sequence is MREYDAAHYDVIVVGAGHAGSEAALAAARMGRETLLLTINLDMVAFMPCNPSLGGPAKGIVVREIDALGGQMGRNIDKTYIQMRMLNTGKGPAVRALRAQADKHAYHRTMKRTIETTEHLTLRQGIAESLIVEDGVCKGIVTNTGARYSADSVILTAGTASRGKIIIGELTYSSGPNNSIPSIKLSESLEDNGFVLTRFKTGTPPRVDGTTIDFSKTEEQPGDKEPNHFSFETPDSAYLKDQLSCWMTYTNDTTHQVIRDNLDRAPMFTGVIEGVGPRYCPSIEDKIVRFADKPRHQIFLEPEGRETEEYYVGDFSTSMPEEIQHKMIHSIEGLENAQMMRPGYAIEYDVVEPWQLKPTLETKVVENLYTAGQMNGTSGYEEAAGQGLMAGINAALKQTGRDPFILDRSEAYIGVLIDDLVTKGTKEPYRLLTSRAEYRLMLRHDNADLRLTEKGHELGLINDDRFDSYEVKKAAVEAELARLEKIRLKPTPEIQAFLAAKGEAPLKDGVLASDFLKRPEVKYADLIQFIPAVEGIDNRVVEQVEIQVKYAGYIDKEKAKIAKLKRMEAKKIPANIDYDAIEGLATEGRQKLQKIQPETLAQASRIGGVNPADIGILSVYIQQGKIAKVK.

15–20 (GAGHAG) is a binding site for FAD. 276–290 (GPRYCPSIEDKIVRF) provides a ligand contact to NAD(+).

Belongs to the MnmG family. Homodimer. Heterotetramer of two MnmE and two MnmG subunits. FAD serves as cofactor.

It localises to the cytoplasm. Functionally, NAD-binding protein involved in the addition of a carboxymethylaminomethyl (cmnm) group at the wobble position (U34) of certain tRNAs, forming tRNA-cmnm(5)s(2)U34. The protein is tRNA uridine 5-carboxymethylaminomethyl modification enzyme MnmG of Latilactobacillus sakei subsp. sakei (strain 23K) (Lactobacillus sakei subsp. sakei).